A 485-amino-acid polypeptide reads, in one-letter code: Glutamyl-tRNA(Gln) amidotransferase subunit A (485 aa).

Active-site charge relay system residues include Lys-78 and Ser-153. Residue Ser-177 is the Acyl-ester intermediate of the active site.

Belongs to the amidase family. GatA subfamily. In terms of assembly, heterotrimer of A, B and C subunits.

It carries out the reaction L-glutamyl-tRNA(Gln) + L-glutamine + ATP + H2O = L-glutaminyl-tRNA(Gln) + L-glutamate + ADP + phosphate + H(+). Its function is as follows. Allows the formation of correctly charged Gln-tRNA(Gln) through the transamidation of misacylated Glu-tRNA(Gln) in organisms which lack glutaminyl-tRNA synthetase. The reaction takes place in the presence of glutamine and ATP through an activated gamma-phospho-Glu-tRNA(Gln). The chain is Glutamyl-tRNA(Gln) amidotransferase subunit A from Syntrophus aciditrophicus (strain SB).